The primary structure comprises 219 residues: Cytidylate kinase (219 aa).

15–23 (GPAASGKGT) contributes to the ATP binding site.

This sequence belongs to the cytidylate kinase family. Type 1 subfamily.

The protein resides in the cytoplasm. The enzyme catalyses CMP + ATP = CDP + ADP. The catalysed reaction is dCMP + ATP = dCDP + ADP. The chain is Cytidylate kinase from Brucella melitensis biotype 1 (strain ATCC 23456 / CCUG 17765 / NCTC 10094 / 16M).